Consider the following 210-residue polypeptide: Redox-sensing transcriptional repressor Rex (210 aa).

The H-T-H motif DNA-binding region spans 16–55 (IYMRTLQELLEDDVDVISSERLAKQCGVNPAQIRKDLAYF). 90–95 (GLGNLG) contributes to the NAD(+) binding site.

It belongs to the transcriptional regulatory Rex family. Homodimer.

It is found in the cytoplasm. In terms of biological role, modulates transcription in response to changes in cellular NADH/NAD(+) redox state. The chain is Redox-sensing transcriptional repressor Rex from Syntrophobacter fumaroxidans (strain DSM 10017 / MPOB).